The chain runs to 382 residues: ATP phosphoribosyltransferase regulatory subunit (382 aa).

Belongs to the class-II aminoacyl-tRNA synthetase family. HisZ subfamily. Heteromultimer composed of HisG and HisZ subunits.

It is found in the cytoplasm. Its pathway is amino-acid biosynthesis; L-histidine biosynthesis; L-histidine from 5-phospho-alpha-D-ribose 1-diphosphate: step 1/9. In terms of biological role, required for the first step of histidine biosynthesis. May allow the feedback regulation of ATP phosphoribosyltransferase activity by histidine. This chain is ATP phosphoribosyltransferase regulatory subunit, found in Lacticaseibacillus casei (strain BL23) (Lactobacillus casei).